The chain runs to 459 residues: MGYVGNVSYPDTIPGQGNLVFEASFESGNLGRVDKVSCSEYDLFIRPDTLNNKYRVWFYFECKNASENQRAIFNIVNFSKQRTLFEMGIAAPVVKSNAQNSWARIPSRHIYYYRSSQHNDRWILSFAFIFESPDPVQFAYCIPYTYGQMQIWLNELESRKYPFFHRDLLVQTVQKRRVDLITIDATPDTFQGSKKMIFLTARVHPGESPSSHVMHGIIEFLVSKDDRAQKLRKVYCFKIIPMLNPDGVFLGNYRCSLMGHDLNRMWRTPSDWAHPSIYAVKNLLTQYDNNPQAQTVIYVDLHAHSQKPNCFLYGNVNMSAVEEKSTFRQLWLPHLLADLSEDYSLEFTQFNTDVEKAGTGRRTMGDLLSCLCYTLEVSFFSYRHTDSSGNGIQHCTPYLQYKYEALGEAFCRALLNFYEADCGLREIVLERPFKTFLPARAQKTLKKQARKVIQTVMMK.

The Peptidase M14 domain maps to 142 to 418 (IPYTYGQMQI…AFCRALLNFY (277 aa)). Zn(2+)-binding residues include His-204, Glu-207, and His-302. Glu-376 acts as the Proton donor/acceptor in catalysis.

It belongs to the peptidase M14 family. Zn(2+) serves as cofactor. In terms of tissue distribution, expressed in labial and amphid neurons.

It is found in the cytoplasm. The enzyme catalyses (L-glutamyl)(n+1)-gamma-L-glutamyl-L-glutamyl-[protein] + H2O = (L-glutamyl)(n)-gamma-L-glutamyl-L-glutamyl-[protein] + L-glutamate. Functionally, metallocarboxypeptidase that catalyzes the removing of polyglutamate side chains that are present on the gamma-carboxyl group of glutamate residues of tubulin in sensory cilia. Probably via the deglutamylation of tubulin, promotes microtubule stability required for axon regrowth after injury. Also regulates microtubule dynamics in uterine muscle cells. This is Cytosolic carboxypeptidase 6 from Caenorhabditis elegans.